The sequence spans 548 residues: Glucose-6-phosphate isomerase (548 aa).

Residue Glu353 is the Proton donor of the active site. Active-site residues include His384 and Lys512.

Belongs to the GPI family.

It localises to the cytoplasm. It catalyses the reaction alpha-D-glucose 6-phosphate = beta-D-fructose 6-phosphate. The protein operates within carbohydrate biosynthesis; gluconeogenesis. It participates in carbohydrate degradation; glycolysis; D-glyceraldehyde 3-phosphate and glycerone phosphate from D-glucose: step 2/4. Functionally, catalyzes the reversible isomerization of glucose-6-phosphate to fructose-6-phosphate. This is Glucose-6-phosphate isomerase from Chlorobium chlorochromatii (strain CaD3).